The sequence spans 255 residues: Type III pantothenate kinase (255 aa).

Residue aspartate 6–aspartate 13 coordinates ATP. Glycine 107–leucine 110 is a binding site for substrate. Aspartate 109 functions as the Proton acceptor in the catalytic mechanism. Residue aspartate 129 participates in K(+) binding. Threonine 132 contributes to the ATP binding site. A substrate-binding site is contributed by threonine 183.

It belongs to the type III pantothenate kinase family. As to quaternary structure, homodimer. The cofactor is NH4(+). K(+) is required as a cofactor.

It localises to the cytoplasm. It carries out the reaction (R)-pantothenate + ATP = (R)-4'-phosphopantothenate + ADP + H(+). It functions in the pathway cofactor biosynthesis; coenzyme A biosynthesis; CoA from (R)-pantothenate: step 1/5. Functionally, catalyzes the phosphorylation of pantothenate (Pan), the first step in CoA biosynthesis. This is Type III pantothenate kinase from Dictyoglomus turgidum (strain DSM 6724 / Z-1310).